The sequence spans 1028 residues: Formate dehydrogenase major subunit (1028 aa).

Positions 1 to 33 form a signal peptide, tat-type signal; sequence MQVSRRKFFKICAGGMAGTSAAMLGFAPANVLA. In terms of domain architecture, 4Fe-4S Mo/W bis-MGD-type spans 43–114; that stretch reads AFESRNTCTY…GSLDYVNSES (72 aa). 4 residues coordinate [4Fe-4S] cluster: C50, C53, C57, and C100. U204 is a non-standard amino acid (selenocysteine).

Belongs to the prokaryotic molybdopterin-containing oxidoreductase family. As to quaternary structure, formate dehydrogenase is a membrane-bound complex, formed by subunits alpha, beta and gamma. It depends on Mo-bis(molybdopterin guanine dinucleotide) as a cofactor. [4Fe-4S] cluster serves as cofactor. Predicted to be exported by the Tat system. The position of the signal peptide cleavage has not been experimentally proven.

The protein resides in the periplasm. It carries out the reaction formate + NAD(+) = CO2 + NADH. Its function is as follows. Allows to use formate as major electron donor during anaerobic respiration. Subunit alpha possibly forms the active site. This is Formate dehydrogenase major subunit (fdxG) from Haemophilus influenzae (strain ATCC 51907 / DSM 11121 / KW20 / Rd).